We begin with the raw amino-acid sequence, 294 residues long: MKRKWERDLGLQGRMLFTMFLLAAVYLFFLAFLSYSGTPPVFMLLFVGAFMGIQYFYSDKMVLWTTGAHIVSESEAPQLHDMVTRLCVIADIPKPQIAIVQTRVPNAFATGRSPNKAVVAVTTGIMDKLTPAELEAVLAHELSHVKNRDMAVLTIASFISTIAFYIVRYSLYFGGMGGDRRRDGGGILLVWLVSIAVWVVSFLLIRALSRYREFAADRGSAIITGQPANLASALMKISGLMDRVPSEDLRKVEGMNAFFIIPAISGSSFMDIFSTHPSVEKRLAQLEKMQKEMS.

A run of 2 helical transmembrane segments spans residues 15–35 (MLFT…FLSY) and 37–57 (GTPP…QYFY). His-140 serves as a coordination point for Zn(2+). Glu-141 is a catalytic residue. His-144 serves as a coordination point for Zn(2+). 2 helical membrane-spanning segments follow: residues 151–171 (AVLT…RYSL) and 185–205 (GGIL…FLLI). Position 213 (Glu-213) interacts with Zn(2+).

It belongs to the peptidase M48B family. Zn(2+) serves as cofactor.

Its subcellular location is the cell membrane. The chain is Protease HtpX homolog 2 from Methanosarcina acetivorans (strain ATCC 35395 / DSM 2834 / JCM 12185 / C2A).